The primary structure comprises 106 residues: Nucleoid-associated protein BBta_7345 (106 aa).

The protein belongs to the YbaB/EbfC family. In terms of assembly, homodimer.

It localises to the cytoplasm. The protein resides in the nucleoid. Binds to DNA and alters its conformation. May be involved in regulation of gene expression, nucleoid organization and DNA protection. The protein is Nucleoid-associated protein BBta_7345 of Bradyrhizobium sp. (strain BTAi1 / ATCC BAA-1182).